A 201-amino-acid chain; its full sequence is Protein FAR-RED-ELONGATED HYPOCOTYL 1-LIKE (201 aa).

Residues 32–35 (KKRK) carry the Nuclear localization sequence (NLS) motif. Residues 43–46 (LLPL) carry the Nuclear export sequence (NES) motif.

It belongs to the FHY1 protein family. As to quaternary structure, homodimer and heterodimer with FHY1. Interacts with PHYA, especially upon far-red (FR) light illumination. Binds to LAF1 and HFR1. Post-translationally, inactivated by rapid reversible PHYA-mediated phosphorylation.

It localises to the nucleus. The protein resides in the cytoplasm. In terms of biological role, can activate transcription. Essential for light-regulated PHYA nuclear accumulation and subsequent PHYA phototropic signaling processes. PHYA-specific signal transducer in response to continuous FR lights. Mediates the association of PHYA with HFR1 and LAF1 in the nucleus in response to FR conditions. Contributes to inhibition of hypocotyl elongation in continuous blue light (B). The sequence is that of Protein FAR-RED-ELONGATED HYPOCOTYL 1-LIKE from Arabidopsis thaliana (Mouse-ear cress).